We begin with the raw amino-acid sequence, 536 residues long: MQETGLRNPTNGIETSGLKTSGTVFFNLTEPQLYEEAIRRAEARISAHGALVAETGQHTGRSPKDKFIVRDASTENEIWWDNNKPLSGEHFEALYEDFKRHAESLDLFVQDLVGGADPENALPVRVVTEYAWHSLFIRNLLIRPMRSELKSFVPQMTVIDLPSFRADPKRHGCRTETIIAMDLKRMIVLIGGTSYAGEMKKSVFTALNYLLPAKGVMPMHCSANEGSEGDVAIFFGLSGTGKTTLSAEPSRTLIGDDEHGWGPHGIFNFEGGCYAKTIKLSREAEPEIFATTERFGTVLENVVVDEHGVPDFDDGSRTENTRCAYPLHFISNASETGRAGQPKNVIMLTADAFGVMPPIAKLTPAQAMYHFLSGYTAKVAGTEKGVTEPEATFSTCFGAPFMPRHPSVYGNLLRDLIAEHEVDCWLVNTGWTGGAYGTGHRMPIKVTRALLSAALDGSLRTAQFRTDPNFGFAVPVAVPGVDGTILDPRSTWADKAAYDVQAERLVSMFVANFGKFENHVEADVMNASPQIRQAAE.

Substrate-binding residues include arginine 61, tyrosine 195, and lysine 201. ATP-binding positions include lysine 201, histidine 220, and 236–244; that span reads GLSGTGKTT. Residues lysine 201 and histidine 220 each contribute to the Mn(2+) site. Position 257 (aspartate 257) interacts with Mn(2+). ATP contacts are provided by glutamate 285, arginine 322, and threonine 447. Substrate is bound at residue arginine 322.

The protein belongs to the phosphoenolpyruvate carboxykinase (ATP) family. Mn(2+) serves as cofactor.

The protein localises to the cytoplasm. It carries out the reaction oxaloacetate + ATP = phosphoenolpyruvate + ADP + CO2. It functions in the pathway carbohydrate biosynthesis; gluconeogenesis. In terms of biological role, involved in the gluconeogenesis. Catalyzes the conversion of oxaloacetate (OAA) to phosphoenolpyruvate (PEP) through direct phosphoryl transfer between the nucleoside triphosphate and OAA. The polypeptide is Phosphoenolpyruvate carboxykinase (ATP) (Chelativorans sp. (strain BNC1)).